Consider the following 271-residue polypeptide: Formamidopyrimidine-DNA glycosylase (271 aa).

Pro2 serves as the catalytic Schiff-base intermediate with DNA. The active-site Proton donor is the Glu3. The active-site Proton donor; for beta-elimination activity is Lys57. 3 residues coordinate DNA: His90, Arg109, and Lys151. The segment at 236-270 (HVYGRGSKSCTHCGNLLSEIRLGQRTTVFCGLCQT) adopts an FPG-type zinc-finger fold. The active-site Proton donor; for delta-elimination activity is the Arg260.

Belongs to the FPG family. Monomer. It depends on Zn(2+) as a cofactor.

The enzyme catalyses Hydrolysis of DNA containing ring-opened 7-methylguanine residues, releasing 2,6-diamino-4-hydroxy-5-(N-methyl)formamidopyrimidine.. The catalysed reaction is 2'-deoxyribonucleotide-(2'-deoxyribose 5'-phosphate)-2'-deoxyribonucleotide-DNA = a 3'-end 2'-deoxyribonucleotide-(2,3-dehydro-2,3-deoxyribose 5'-phosphate)-DNA + a 5'-end 5'-phospho-2'-deoxyribonucleoside-DNA + H(+). Its function is as follows. Involved in base excision repair of DNA damaged by oxidation or by mutagenic agents. Acts as a DNA glycosylase that recognizes and removes damaged bases. Has a preference for oxidized purines, such as 7,8-dihydro-8-oxoguanine (8-oxoG). Has AP (apurinic/apyrimidinic) lyase activity and introduces nicks in the DNA strand. Cleaves the DNA backbone by beta-delta elimination to generate a single-strand break at the site of the removed base with both 3'- and 5'-phosphates. The polypeptide is Formamidopyrimidine-DNA glycosylase (Shewanella denitrificans (strain OS217 / ATCC BAA-1090 / DSM 15013)).